Here is a 426-residue protein sequence, read N- to C-terminus: MDNSFDIYEIKARQVLDSRGNPTIEAEVLTAGRGYGHAIVPSGASTGTFEAVELRDLGKKYGGKGVLNAVGNVNEIIAPELIGEDSRNQRLIDNIMINLDGTENKANLGANAILAVSMAVARAAADTSSLPLYKYLGGCNSYIMPVPMMNVLNGGKHAGNALDFQEFMIMPIGADSFSDAVRMCAETYQSLKKVISEKYGKDAVNIGDEGGFAPPVKTIDEAFSVLLEGVKRAGYENEIVFTLDSAASEFYDEKTNSYVVLGESLSTDKLIEIYKDMVSKYPIVSIEDPLFEGDFEGFKEITKELKGIQIIGDDIFVTNTNRLKKGIEMNAANALLLKVNQIGTISESIDAANLASRNGYGVIVSHRSGETEDSIISDLTVALNSGQIKTGAPARGERTAKYNQLIRIEEELQISKYAGKNFKIPF.

Residue Q165 coordinates (2R)-2-phosphoglycerate. Residue E209 is the Proton donor of the active site. Residues D244, E287, and D313 each coordinate Mg(2+). The (2R)-2-phosphoglycerate site is built by K338, R367, S368, and K389. K338 (proton acceptor) is an active-site residue.

Belongs to the enolase family. It depends on Mg(2+) as a cofactor.

Its subcellular location is the cytoplasm. The protein localises to the secreted. The protein resides in the cell surface. The enzyme catalyses (2R)-2-phosphoglycerate = phosphoenolpyruvate + H2O. The protein operates within carbohydrate degradation; glycolysis; pyruvate from D-glyceraldehyde 3-phosphate: step 4/5. In terms of biological role, catalyzes the reversible conversion of 2-phosphoglycerate (2-PG) into phosphoenolpyruvate (PEP). It is essential for the degradation of carbohydrates via glycolysis. The protein is Enolase of Methanococcus vannielii (strain ATCC 35089 / DSM 1224 / JCM 13029 / OCM 148 / SB).